The sequence spans 548 residues: Fluconazole resistance protein 1 (548 aa).

The tract at residues 30-94 is disordered; it reads SAREDETRKP…WNGPSDPENP (65 aa). Basic and acidic residues predominate over residues 31 to 51; that stretch reads AREDETRKPENTDKKECKPDY. Residues 60-73 show a composition bias toward low complexity; the sequence is SCSESSTDSDSSGS. Helical transmembrane passes span 104 to 124, 139 to 159, 179 to 199, 203 to 223, 230 to 250, 261 to 281, 347 to 367, 376 to 396, 416 to 436, 440 to 460, 476 to 496, and 511 to 531; these read LVVF…SIYT, VVAT…PIIF, FFFM…GLIV, ISGI…ADII, LVLG…PLLG, FIFW…AFFF, IAVA…VFVG, VGLA…LFGI, FLIV…LFGW, VHWI…FNIF, ASVF…FPLF, and VAWG…IPFI.

This sequence belongs to the major facilitator superfamily.

Its subcellular location is the membrane. Its function is as follows. Probable efflux transporter. Confers resistance to the azole derivative fluconazole (FCZ). The chain is Fluconazole resistance protein 1 (FLR1) from Saccharomyces cerevisiae (strain ATCC 204508 / S288c) (Baker's yeast).